Reading from the N-terminus, the 88-residue chain is Small ribosomal subunit protein bS20 (88 aa).

It belongs to the bacterial ribosomal protein bS20 family. In terms of assembly, part of the 30S ribosomal subunit.

Functionally, binds directly to 16S ribosomal RNA. The chain is Small ribosomal subunit protein bS20 (rpsT) from Bacillus subtilis (strain 168).